A 489-amino-acid chain; its full sequence is Ribonuclease G (489 aa).

The region spanning 39 to 128 (GNIYKGRVSR…LTTDITLPSR (90 aa)) is the S1 motif domain. 2 residues coordinate Mg(2+): Asp-304 and Asp-347.

The protein belongs to the RNase E/G family. RNase G subfamily. In terms of assembly, homodimer, in equilibrium with possible higher multimers. It depends on Mg(2+) as a cofactor.

It localises to the cytoplasm. Its function is as follows. An endonuclease that acts in the processing of the 5'-end of 16S rRNA and 23S rRNA. It prefers 5'-monophosphorylated substrates and cleaves single-stranded sites rich in A and U residues; contributes to tRNA processing and mRNA turnover. The sequence is that of Ribonuclease G (rng) from Escherichia coli O157:H7.